A 308-amino-acid chain; its full sequence is Protoheme IX farnesyltransferase (308 aa).

8 consecutive transmembrane segments (helical) span residues 31-51 (VIELLLVTAIPAMLLAQRGTV), 53-73 (PLLIVNTLIGGMLAAGGANAL), 102-122 (NALVFGLVLTAGSFLWLWWTT), 124-144 (LLSGLLALATIAFYVFIYTLL), 149-169 (TSQNVVWGGAAGCMPVMIGWS), 170-190 (AVTGTIQWPALVMFAIIFFWT), 240-260 (LALATGWLYAAVALVAGVWFL), and 288-308 (YLAVVFCALAIDSAIGLPHLF).

This sequence belongs to the UbiA prenyltransferase family. Protoheme IX farnesyltransferase subfamily.

Its subcellular location is the cell membrane. It catalyses the reaction heme b + (2E,6E)-farnesyl diphosphate + H2O = Fe(II)-heme o + diphosphate. It participates in porphyrin-containing compound metabolism; heme O biosynthesis; heme O from protoheme: step 1/1. In terms of biological role, converts heme B (protoheme IX) to heme O by substitution of the vinyl group on carbon 2 of heme B porphyrin ring with a hydroxyethyl farnesyl side group. In Mycolicibacterium paratuberculosis (strain ATCC BAA-968 / K-10) (Mycobacterium paratuberculosis), this protein is Protoheme IX farnesyltransferase.